The following is a 479-amino-acid chain: Putative F-box/LRR-repeat protein At1g56400 (479 aa).

One can recognise an F-box domain in the interval 12-60 (QDRLSNLPDVLLIMIISCLSFKECIRTSVLAKRWRYLCRETRNISFKET). 7 LRR repeats span residues 99-129 (YFSI…VLDF), 139-167 (CASR…KIYS), 186-211 (IGWI…SINY), 228-254 (VFES…KYSG), 287-312 (RTKL…SVCP), 342-367 (LHVM…TFDI), and 419-446 (LKFL…ELYM).

In Arabidopsis thaliana (Mouse-ear cress), this protein is Putative F-box/LRR-repeat protein At1g56400.